Consider the following 541-residue polypeptide: Protein wntless homolog (541 aa).

The first 42 residues, 1–42 (MAGAIIENMSTRKLCIVGGILLVFQVIAFLVGGLIAPSPTTA), serve as a signal peptide directing secretion. The Lumenal segment spans residues 43–232 (VPYMSVKCID…GIHQNGGFTK (190 aa)). The helical transmembrane segment at 233–253 (VWFAMKTFLTPSILIIMVWYW) threads the bilayer. Residues 254–268 (RRITLMTRAPVLLEK) are Cytoplasmic-facing. The chain crosses the membrane as a helical span at residues 269 to 289 (VIFALGISMTFINIPVEWFSI). Residues 290–303 (GFDWTWMLLFGDIR) are Lumenal-facing. A helical transmembrane segment spans residues 304 to 324 (QGIFYAMLLSFWIIFCGEHMM). Residues 325 to 331 (DQNERNR) lie on the Cytoplasmic side of the membrane. Residues 332-352 (LSGYWKQVGPIAVGSFCLFIF) form a helical membrane-spanning segment. Topologically, residues 353 to 380 (DMCERGVQLKNPFYSIWTTEVGTELAMA) are lumenal. Residues 381 to 401 (FIIVAGICLCLYFLFLCFMVF) form a helical membrane-spanning segment. Residues 402–431 (QVFRNISGKQSSLPAMSKARRLHYEGLIFR) are Cytoplasmic-facing. A helical membrane pass occupies residues 432 to 452 (FKFLMLITLACAAMTVIFFIV). Residues 453–471 (SQVTEGHWKWGDITIQVNS) are Lumenal-facing. Residues 472-492 (AFFTGIYGMWNLYVFALMFLY) form a helical membrane-spanning segment. The Cytoplasmic segment spans residues 493-541 (APSHKNYGEDQSNGDLGVSSGEELQLTTTITHVDGPTEVYKLARKEAQE).

The protein belongs to the wntless family.

The protein resides in the golgi apparatus membrane. The protein localises to the cytoplasmic vesicle membrane. Its function is as follows. May play an essential role in Wnt signaling pathway. May be required for Wnt-dependent patterning processes. This Gallus gallus (Chicken) protein is Protein wntless homolog (WLS).